We begin with the raw amino-acid sequence, 403 residues long: Solanesyl-diphosphate synthase 2, chloroplastic (403 aa).

Residues 1-62 (MLSVSCPRVY…QPGLAAVDVP (62 aa)) constitute a chloroplast transit peptide. Residues lysine 123, arginine 126, and histidine 161 each contribute to the isopentenyl diphosphate site. Residues aspartate 168 and aspartate 172 each coordinate Mg(2+). Arginine 177 provides a ligand contact to an all-trans-polyprenyl diphosphate. Arginine 178 is an isopentenyl diphosphate binding site. 4 residues coordinate an all-trans-polyprenyl diphosphate: lysine 254, threonine 255, glutamine 292, and lysine 309.

This sequence belongs to the FPP/GGPP synthase family. Homodimer. Interacts with FBN5. It depends on Mg(2+) as a cofactor. Expressed in leaves, stems and roots. Highest expression in leaves and roots.

Its subcellular location is the plastid. It localises to the chloroplast. The catalysed reaction is 7 isopentenyl diphosphate + (2E)-geranyl diphosphate = all-trans-nonaprenyl diphosphate + 7 diphosphate. In terms of biological role, involved in providing solanesyl diphosphate for plastoquinone-9 (PQ-9) formation. Geranyl diphosphate is the preferred substrate. The sequence is that of Solanesyl-diphosphate synthase 2, chloroplastic from Oryza sativa subsp. japonica (Rice).